The primary structure comprises 341 residues: L-threonine 3-dehydrogenase (341 aa).

A Zn(2+)-binding site is contributed by Cys-38. Catalysis depends on charge relay system residues Thr-40 and His-43. 6 residues coordinate Zn(2+): His-63, Glu-64, Cys-93, Cys-96, Cys-99, and Cys-107. NAD(+)-binding positions include Ile-175, Asp-195, Arg-200, Leu-262–Ile-264, and Ile-286–Tyr-287.

The protein belongs to the zinc-containing alcohol dehydrogenase family. As to quaternary structure, homotetramer. Requires Zn(2+) as cofactor.

It localises to the cytoplasm. The enzyme catalyses L-threonine + NAD(+) = (2S)-2-amino-3-oxobutanoate + NADH + H(+). The protein operates within amino-acid degradation; L-threonine degradation via oxydo-reductase pathway; glycine from L-threonine: step 1/2. Catalyzes the NAD(+)-dependent oxidation of L-threonine to 2-amino-3-ketobutyrate. The polypeptide is L-threonine 3-dehydrogenase (Enterobacter sp. (strain 638)).